The following is a 131-amino-acid chain: C-type natriuretic peptide 1 (131 aa).

The N-terminal stretch at methionine 1–alanine 22 is a signal peptide. The propeptide occupies arginine 23–arginine 109. The cysteines at positions 115 and 131 are disulfide-linked.

It belongs to the natriuretic peptide family. Brain and spinal cord.

It localises to the secreted. In terms of biological role, exhibits natriuretic and vasodepressant activity. Has cGMP-stimulating activity. May help to regulate body fluid homeostasis in a variety of aquatic environments. In Oryzias latipes (Japanese rice fish), this protein is C-type natriuretic peptide 1.